Consider the following 195-residue polypeptide: Calcineurin B homologous protein 1 (195 aa).

Glycine 2 carries the N-myristoyl glycine lipid modification. A Necessary for association with microtubule and interaction with GAPDH motif is present at residues 2-6; sequence GSRAS. 4 EF-hand domains span residues 26–61, 66–101, 110–145, and 151–186; these read SQIT…AINP, IINA…KSKD, SRSN…MVGV, and QLGS…VDVE. Ca(2+)-binding residues include aspartate 123, aspartate 125, aspartate 127, lysine 129, and glutamate 134. Positions 138–147 match the Nuclear export signal 1 motif; it reads VLRMMVGVNI. Positions 164, 166, 168, and 175 each coordinate Ca(2+). A Nuclear export signal 2 motif is present at residues 176–185; it reads FVKVLEKVDV.

This sequence belongs to the calcineurin regulatory subunit family. CHP subfamily. Monomer. Interacts with STK17B; the interaction occurs in a calcium-independent manner and induces the translocation of CHP1 from the Golgi to the nucleus. Interacts with GAPDH; the interaction is direct, occurs in a N-myristoylation-dependent manner and facilitates the ability of CHP1 to bind microtubules. Interacts with KIF1B (via the C-terminal end of the kinesin-motor domain); the interaction occurs in a calcium-dependent manner. Associates (via C-terminal domain) with microtubules; the association occurs with polymerized microtubules during the cell cycle in a myristoylation- and calcium-independent manner and is enhanced by GAPDH. Interacts with PPP3CA. Interacts with SLC9A1/NHE1 (via the cytoplasmic C-terminal domain); the interaction occurs at the plasma membrane in a calcium-dependent manner and at a domain that is critical for growth factor stimulation of the exchanger. Interacts with SLC9A3; increases SLC9A3 trafficking and activity at the plasma membrane. In terms of processing, phosphorylated; decreased phosphorylation is associated with an increase in SLC9A1/NHE1 Na(+)/H(+) exchange activity. Phosphorylation occurs in serum-dependent manner. The phosphorylation state may regulate the binding to SLC9A1/NHE1. Both N-myristoylation and calcium-mediated conformational changes are essential for its function in exocytic traffic. N-myristoylation is required for its association with microtubules and interaction with GAPDH, but not for the constitutive association to membranes.

The protein resides in the nucleus. Its subcellular location is the cytoplasm. The protein localises to the cytoskeleton. It localises to the endomembrane system. It is found in the endoplasmic reticulum-Golgi intermediate compartment. The protein resides in the endoplasmic reticulum. Its subcellular location is the cell membrane. The protein localises to the membrane. Its function is as follows. Calcium-binding protein involved in different processes such as regulation of vesicular trafficking, plasma membrane Na(+)/H(+) exchanger and gene transcription. Involved in the constitutive exocytic membrane traffic. Mediates the association between microtubules and membrane-bound organelles of the endoplasmic reticulum and Golgi apparatus and is also required for the targeting and fusion of transcytotic vesicles (TCV) with the plasma membrane. Functions as an integral cofactor in cell pH regulation by controlling plasma membrane-type Na(+)/H(+) exchange activity. Affects the pH sensitivity of SLC9A1/NHE1 by increasing its sensitivity at acidic pH. Required for the stabilization and localization of SLC9A1/NHE1 at the plasma membrane. Inhibits serum- and GTPase-stimulated Na(+)/H(+) exchange. Plays a role as an inhibitor of ribosomal RNA transcription by repressing the nucleolar UBF1 transcriptional activity. May sequester UBF1 in the nucleoplasm and limit its translocation to the nucleolus. Associates to the ribosomal gene promoter. Acts as a negative regulator of the calcineurin/NFAT signaling pathway. Inhibits NFAT nuclear translocation and transcriptional activity by suppressing the calcium-dependent calcineurin phosphatase activity. Also negatively regulates the kinase activity of the apoptosis-induced kinase STK17B. Inhibits both STK17B auto- and substrate-phosphorylations in a calcium-dependent manner. The polypeptide is Calcineurin B homologous protein 1 (CHP1) (Bos taurus (Bovine)).